We begin with the raw amino-acid sequence, 1379 residues long: DNA-directed RNA polymerase subunit beta (1379 aa).

The protein belongs to the RNA polymerase beta chain family. In terms of assembly, the RNAP catalytic core consists of 2 alpha, 1 beta, 1 beta' and 1 omega subunit. When a sigma factor is associated with the core the holoenzyme is formed, which can initiate transcription.

It carries out the reaction RNA(n) + a ribonucleoside 5'-triphosphate = RNA(n+1) + diphosphate. Its function is as follows. DNA-dependent RNA polymerase catalyzes the transcription of DNA into RNA using the four ribonucleoside triphosphates as substrates. The protein is DNA-directed RNA polymerase subunit beta of Rhizobium leguminosarum bv. trifolii (strain WSM2304).